The sequence spans 371 residues: Queuine tRNA-ribosyltransferase (371 aa).

The active-site Proton acceptor is aspartate 89. Residues 89-93 (DSGGF), aspartate 143, glutamine 185, and glycine 212 each bind substrate. The RNA binding stretch occupies residues 243–249 (GVGTPED). Aspartate 262 acts as the Nucleophile in catalysis. The interval 267-271 (TRNAR) is RNA binding; important for wobble base 34 recognition. Residues cysteine 300, cysteine 302, cysteine 305, and histidine 331 each coordinate Zn(2+).

It belongs to the queuine tRNA-ribosyltransferase family. Homodimer. Within each dimer, one monomer is responsible for RNA recognition and catalysis, while the other monomer binds to the replacement base PreQ1. The cofactor is Zn(2+).

The catalysed reaction is 7-aminomethyl-7-carbaguanine + guanosine(34) in tRNA = 7-aminomethyl-7-carbaguanosine(34) in tRNA + guanine. Its pathway is tRNA modification; tRNA-queuosine biosynthesis. Its function is as follows. Catalyzes the base-exchange of a guanine (G) residue with the queuine precursor 7-aminomethyl-7-deazaguanine (PreQ1) at position 34 (anticodon wobble position) in tRNAs with GU(N) anticodons (tRNA-Asp, -Asn, -His and -Tyr). Catalysis occurs through a double-displacement mechanism. The nucleophile active site attacks the C1' of nucleotide 34 to detach the guanine base from the RNA, forming a covalent enzyme-RNA intermediate. The proton acceptor active site deprotonates the incoming PreQ1, allowing a nucleophilic attack on the C1' of the ribose to form the product. After dissociation, two additional enzymatic reactions on the tRNA convert PreQ1 to queuine (Q), resulting in the hypermodified nucleoside queuosine (7-(((4,5-cis-dihydroxy-2-cyclopenten-1-yl)amino)methyl)-7-deazaguanosine). This Nitrosomonas europaea (strain ATCC 19718 / CIP 103999 / KCTC 2705 / NBRC 14298) protein is Queuine tRNA-ribosyltransferase.